The primary structure comprises 573 residues: MEEEQDLPEQPVKKAKMQESGEQTISQVSNPDVSDQKPETSSLASNLPMSEEIMTCTDYIPRSSNDYTSQMYSAKPYAHILSVPVSETAYPGQTQYQTLQQTQPYAVYPQATQTYGLPPFGALWPGMKPESGLIQTPSPSQHSVLTCTTGLTTSQPSPAHYSYPIQASSTNASLISTSSTIANIPAAAVASISNQDYPTYTILGQNQYQACYPSSSFGVTGQTNSDAESTTLAATTYQSEKPSVMAPAPAAQRLSSGDPSTSPSLSQTTPSKDTDDQSRKNMTSKNRGKRKADATSSQDSELERVFLWDLDETIIIFHSLLTGSYAQKYGKDPTVVIGSGLTMEEMIFEVADTHLFFNDLEECDQVHVEDVASDDNGQDLSNYSFSTDGFSGSGGSGSHGSSVGVQGGVDWMRKLAFRYRKVREIYDKHKSNVGGLLSPQRKEALQRLRAEIEVLTDSWLGTALKSLLLIQSRKNCVNVLITTTQLVPALAKVLLYGLGEIFPIENIYSATKIGKESCFERIVSRFGKKVTYVVIGDGRDEEIAAKQHNMPFWRITNHGDLVSLHQALELDFL.

Met-1 is subject to N-acetylmethionine. Disordered stretches follow at residues 1–46 (MEEE…LASN) and 236–296 (TYQS…DATS). Over residues 20–46 (SGEQTISQVSNPDVSDQKPETSSLASN) the composition is skewed to polar residues. The segment covering 254–271 (LSSGDPSTSPSLSQTTPS) has biased composition (low complexity). 2 positions are modified to phosphoserine: Ser-262 and Ser-266. Asp-309 (nucleophile) is an active-site residue. The Mg(2+) site is built by Asp-309 and Asp-311. Asp-311 serves as the catalytic Proton donor. A phosphoserine mark is found at Ser-438 and Ser-472. Asp-537 contributes to the Mg(2+) binding site.

It belongs to the HAD-like hydrolase superfamily. EYA family. In terms of assembly, interacts with SIX1 and DACH1, and probably SIX2, SIX4, SIX5. Requires Mg(2+) as cofactor. Post-translationally, ser-266 phosphorylation is required for localization at sites of DNA damage and directing interaction with H2AX.

It localises to the cytoplasm. The protein resides in the nucleus. It carries out the reaction O-phospho-L-tyrosyl-[protein] + H2O = L-tyrosyl-[protein] + phosphate. Its function is as follows. Tyrosine phosphatase that specifically dephosphorylates 'Tyr-142' of histone H2AX (H2AXY142ph). 'Tyr-142' phosphorylation of histone H2AX plays a central role in DNA repair and acts as a mark that distinguishes between apoptotic and repair responses to genotoxic stress. Promotes efficient DNA repair by dephosphorylating H2AX, promoting the recruitment of DNA repair complexes containing MDC1. Its function as histone phosphatase probably explains its role in transcription regulation during organogenesis. Coactivates SIX1, and seems to coactivate SIX2, SIX4 and SIX5. The repression of precursor cell proliferation in myoblasts by SIX1 is switched to activation through recruitment of EYA3 to the SIX1-DACH1 complex and seems to be dependent on EYA3 phosphatase activity. May be involved in development of the eye. The polypeptide is Protein phosphatase EYA3 (EYA3) (Homo sapiens (Human)).